The sequence spans 316 residues: Protein lifeguard 2 (316 aa).

A disordered region spans residues 1–53; sequence MTQGKLSVANKAPGTEGQQQVHGEKKEAPAVPSAPPSYEEATSGEGMKAGAFP. The next 3 membrane-spanning stretches (helical) occupy residues 106 to 126, 138 to 158, and 165 to 185; these read VYTI…LFTF, PGWY…LACC, and FPWN…LTGM. The N-linked (GlcNAc...) asparagine glycan is linked to Asn-191. The next 4 helical transmembrane spans lie at 194 to 214, 225 to 245, 250 to 270, and 290 to 310; these read SVLL…VFSF, GVLF…AILL, VPWL…LFLA, and IFGA…FLQL.

The protein belongs to the BI1 family. LFG subfamily. Interacts with FAS/TNFRSF6 and BAX.

The protein resides in the cell membrane. Its subcellular location is the membrane raft. The protein localises to the postsynaptic cell membrane. In terms of biological role, antiapoptotic protein which protects cells uniquely from Fas-induced apoptosis. Regulates Fas-mediated apoptosis in neurons by interfering with caspase-8 activation. Plays a role in cerebellar development by affecting cerebellar size, internal granular layer (IGL) thickness, and Purkinje cell (PC) development. This is Protein lifeguard 2 (FAIM2) from Pongo abelii (Sumatran orangutan).